The primary structure comprises 130 residues: Small ribosomal subunit protein uS11 (130 aa).

It belongs to the universal ribosomal protein uS11 family. As to quaternary structure, part of the 30S ribosomal subunit. Interacts with proteins S7 and S18. Binds to IF-3.

Functionally, located on the platform of the 30S subunit, it bridges several disparate RNA helices of the 16S rRNA. Forms part of the Shine-Dalgarno cleft in the 70S ribosome. The chain is Small ribosomal subunit protein uS11 from Xanthomonas oryzae pv. oryzae (strain MAFF 311018).